Here is a 560-residue protein sequence, read N- to C-terminus: Dimethylaniline monooxygenase [N-oxide-forming] 4 (560 aa).

FAD is bound by residues 9–13 (GAGVS), Glu-32, and 40–41 (LW). Residues 60 to 61 (TN) and 195 to 198 (TGGD) each bind NADP(+). The chain crosses the membrane as a helical span at residues 519–539 (APVLIVSLLLIYKSSLFLELV).

Belongs to the FMO family. It depends on FAD as a cofactor. As to expression, detected in liver and kidney (at protein level).

Its subcellular location is the microsome membrane. The protein localises to the endoplasmic reticulum membrane. The enzyme catalyses N,N-dimethylaniline + NADPH + O2 + H(+) = N,N-dimethylaniline N-oxide + NADP(+) + H2O. Functionally, this protein is involved in the oxidative metabolism of a variety of xenobiotics such as drugs and pesticides. The protein is Dimethylaniline monooxygenase [N-oxide-forming] 4 (Fmo4) of Rattus norvegicus (Rat).